A 358-amino-acid polypeptide reads, in one-letter code: Fructose-bisphosphate aldolase 3, cytoplasmic (358 aa).

Arg39 is a binding site for substrate. The active-site Proton acceptor is Glu183. Lys225 (schiff-base intermediate with dihydroxyacetone-P) is an active-site residue. Substrate contacts are provided by residues Ser266–Gly268 and Arg298.

Belongs to the class I fructose-bisphosphate aldolase family. Homotetramer.

It is found in the cytoplasm. It localises to the cytosol. It catalyses the reaction beta-D-fructose 1,6-bisphosphate = D-glyceraldehyde 3-phosphate + dihydroxyacetone phosphate. It participates in carbohydrate degradation; glycolysis; D-glyceraldehyde 3-phosphate and glycerone phosphate from D-glucose: step 4/4. Its function is as follows. Fructose-bisphosphate aldolase that plays a key role in glycolysis and gluconeogenesis. In Oryza sativa subsp. japonica (Rice), this protein is Fructose-bisphosphate aldolase 3, cytoplasmic.